The following is a 353-amino-acid chain: D-alanine--D-alanine ligase A (353 aa).

The 206-residue stretch at 141-346 (KRLVNEAGLS…YPEIINRLVA (206 aa)) folds into the ATP-grasp domain. 169–224 (EQALGLPIFIKPARQGSSVGVHKVVTEADYQAAMSDGFTYDDKLLAEEFIQAREVE) provides a ligand contact to ATP. 3 residues coordinate Mg(2+): Asp300, Glu313, and Asn315.

Belongs to the D-alanine--D-alanine ligase family. Requires Mg(2+) as cofactor. Mn(2+) is required as a cofactor.

The protein resides in the cytoplasm. It carries out the reaction 2 D-alanine + ATP = D-alanyl-D-alanine + ADP + phosphate + H(+). It participates in cell wall biogenesis; peptidoglycan biosynthesis. Functionally, cell wall formation. The chain is D-alanine--D-alanine ligase A from Brucella suis biovar 1 (strain 1330).